A 127-amino-acid polypeptide reads, in one-letter code: Fluoride-specific ion channel FluC (127 aa).

A run of 4 helical transmembrane segments spans residues 4-24 (LLLA…LLSM), 35-55 (LGTL…FAWF), 71-91 (TGFC…VFLL), and 103-123 (VFVN…LFSA). Positions 75 and 78 each coordinate Na(+).

This sequence belongs to the fluoride channel Fluc/FEX (TC 1.A.43) family.

The protein localises to the cell inner membrane. The catalysed reaction is fluoride(in) = fluoride(out). Its activity is regulated as follows. Na(+) is not transported, but it plays an essential structural role and its presence is essential for fluoride channel function. Functionally, fluoride-specific ion channel. Important for reducing fluoride concentration in the cell, thus reducing its toxicity. This chain is Fluoride-specific ion channel FluC, found in Escherichia coli O8 (strain IAI1).